The sequence spans 197 residues: Fucoxanthin-chlorophyll a-c binding protein F, chloroplastic (197 aa).

The N-terminal 31 residues, 1–31 (MKFAVFASLLASAAAFAPAQQSARTSVATNM), are a transit peptide targeting the chloroplast. 3 helical membrane-spanning segments follow: residues 73–94 (ISML…PGDI), 114–134 (ISTA…IAVM), and 174–196 (GRAA…SLIP).

The protein belongs to the fucoxanthin chlorophyll protein family. In terms of assembly, the LHC complex of chromophytic algae is composed of fucoxanthin, chlorophyll A and C bound non-covalently by fucoxanthin chlorophyll proteins (FCPs). The ratio of the pigments in lhc; fucoxanthin: chlorophyll C: chlorophyll A is (0.6-1): (0.1-0.3): (1).

The protein resides in the plastid. Its subcellular location is the chloroplast thylakoid membrane. The light-harvesting complex (LHC) functions as a light receptor, it captures and delivers excitation energy to photosystems with which it is closely associated. In chromophytic algae, LHC is associated with photosystem II, energy being transferred from fucoxanthin and chlorophyll C to chlorophyll A and the photosynthetic reaction centers where it is used to synthesize ATP and reducing power. The chain is Fucoxanthin-chlorophyll a-c binding protein F, chloroplastic (FCPF) from Phaeodactylum tricornutum (Diatom).